The chain runs to 262 residues: Spindlin-1 (262 aa).

A disordered region spans residues 1–49 (MKTPFGKTPGQRSRADAGHAGVSANMMKKRTSHKKHRTSVGPSKPVSQP). Glycyl lysine isopeptide (Lys-Gly) (interchain with G-Cter in SUMO2) cross-links involve residues K7 and K28. Over residues 27 to 38 (MKKRTSHKKHRT) the composition is skewed to basic residues. The residue at position 44 (K44) is an N6-acetyllysine; alternate. A Glycyl lysine isopeptide (Lys-Gly) (interchain with G-Cter in SUMO2); alternate cross-link involves residue K44. Positions 53–116 (IVGCRIQHGW…RVSALEVLPD (64 aa)) are tudor-like domain 1. A histone H3K4me3 and H3R8me2a binding region spans residues 93 to 98 (GFDCVY). 2 positions are modified to phosphoserine; by AURKA: S109 and S124. A tudor-like domain 2 region spans residues 132-193 (MIGKAVEHMF…DYKEGDLRIM (62 aa)). E142 is a region of interest (histone H3K4me3 and H3R8me2a binding). A Phosphoserine modification is found at S199. The segment at 213 to 262 (LVGKQVEYAKEDGSKRTGMVIHQVEAKPSVYFIKFDDDFHIYVYDLVKTS) is tudor-like domain 3. The histone H3K4me3 and H3R8me2a binding stretch occupies residues 250-252 (DFH).

Belongs to the SPIN/STSY family. In terms of assembly, homodimer; may form higher-order oligomers. Interacts with TCF7L2/TCF4; the interaction is direct. Interacts with HABP4 and SERBP1. Interacts with SPINDOC; SPINDOC stabilizes SPIN1 and enhances its association with bivalent H3K4me3K9me3 mark. Interacts with SPOCD1; promoting recruitment of PIWIL4 and SPOCD1 to transposons. Post-translationally, phosphorylated during oocyte meiotic maturation.

Its subcellular location is the nucleus. The protein localises to the nucleolus. Chromatin reader that specifically recognizes and binds histone H3 both trimethylated at 'Lys-4' and 'Lys-9' (H3K4me3K9me3) and is involved in piRNA-mediated retrotransposon silencing during spermatogenesis. Plays a key role in the initiation of the PIWIL4-piRNA pathway, a pathway that directs transposon DNA methylation and silencing in the male embryonic germ cells, by promoting recruitment of DNA methylation machinery to transposons: binds young, but not old, LINE1 transposons, which are specifically marked with H3K4me3K9me3, and promotes the recruitment of PIWIL4 and SPOCD1 to transposons, leading to piRNA-directed DNA methylation. Also recognizes and binds histone H3 both trimethylated at 'Lys-4' and asymmetrically dimethylated at 'Arg-8' (H3K4me3 and H3R8me2a) and acts as an activator of Wnt signaling pathway downstream of PRMT2. Overexpression induces metaphase arrest and chromosomal instability. Overexpression induces metaphase arrest and chromosomal instability. Localizes to active rDNA loci and promotes the expression of rRNA genes. May play a role in cell-cycle regulation during the transition from gamete to embryo. Involved in oocyte meiotic resumption, a process that takes place before ovulation to resume meiosis of oocytes blocked in prophase I: may act by regulating maternal transcripts to control meiotic resumption. This Rattus norvegicus (Rat) protein is Spindlin-1 (Spin1).